Here is a 309-residue protein sequence, read N- to C-terminus: Probable manganese-dependent inorganic pyrophosphatase (309 aa).

6 residues coordinate Mn(2+): His-9, Asp-13, Asp-15, Asp-75, His-97, and Asp-149.

This sequence belongs to the PPase class C family. Mn(2+) serves as cofactor.

The protein resides in the cytoplasm. It catalyses the reaction diphosphate + H2O = 2 phosphate + H(+). This is Probable manganese-dependent inorganic pyrophosphatase from Bacillus cereus (strain ZK / E33L).